A 406-amino-acid polypeptide reads, in one-letter code: Phosphopentomutase (406 aa).

Mn(2+)-binding residues include Asp10, Asp305, His310, Asp346, His347, and His358.

It belongs to the phosphopentomutase family. It depends on Mn(2+) as a cofactor.

It localises to the cytoplasm. The enzyme catalyses 2-deoxy-alpha-D-ribose 1-phosphate = 2-deoxy-D-ribose 5-phosphate. The catalysed reaction is alpha-D-ribose 1-phosphate = D-ribose 5-phosphate. It participates in carbohydrate degradation; 2-deoxy-D-ribose 1-phosphate degradation; D-glyceraldehyde 3-phosphate and acetaldehyde from 2-deoxy-alpha-D-ribose 1-phosphate: step 1/2. Its function is as follows. Isomerase that catalyzes the conversion of deoxy-ribose 1-phosphate (dRib-1-P) and ribose 1-phosphate (Rib-1-P) to deoxy-ribose 5-phosphate (dRib-5-P) and ribose 5-phosphate (Rib-5-P), respectively. The polypeptide is Phosphopentomutase (Sinorhizobium medicae (strain WSM419) (Ensifer medicae)).